Here is a 190-residue protein sequence, read N- to C-terminus: 6,7-dimethyl-8-ribityllumazine synthase (190 aa).

5-amino-6-(D-ribitylamino)uracil is bound by residues tryptophan 31, 65-67, and 89-91; these read SFE and CVI. A (2S)-2-hydroxy-3-oxobutyl phosphate-binding site is contributed by 94-95; that stretch reads ET. Histidine 97 serves as the catalytic Proton donor. Phenylalanine 122 contacts 5-amino-6-(D-ribitylamino)uracil. Arginine 136 provides a ligand contact to (2S)-2-hydroxy-3-oxobutyl phosphate.

This sequence belongs to the DMRL synthase family.

It carries out the reaction (2S)-2-hydroxy-3-oxobutyl phosphate + 5-amino-6-(D-ribitylamino)uracil = 6,7-dimethyl-8-(1-D-ribityl)lumazine + phosphate + 2 H2O + H(+). It participates in cofactor biosynthesis; riboflavin biosynthesis; riboflavin from 2-hydroxy-3-oxobutyl phosphate and 5-amino-6-(D-ribitylamino)uracil: step 1/2. In terms of biological role, catalyzes the formation of 6,7-dimethyl-8-ribityllumazine by condensation of 5-amino-6-(D-ribitylamino)uracil with 3,4-dihydroxy-2-butanone 4-phosphate. This is the penultimate step in the biosynthesis of riboflavin. The sequence is that of 6,7-dimethyl-8-ribityllumazine synthase from Flavobacterium johnsoniae (strain ATCC 17061 / DSM 2064 / JCM 8514 / BCRC 14874 / CCUG 350202 / NBRC 14942 / NCIMB 11054 / UW101) (Cytophaga johnsonae).